Reading from the N-terminus, the 307-residue chain is Methionyl-tRNA formyltransferase (307 aa).

Position 108–111 (108–111) interacts with (6S)-5,6,7,8-tetrahydrofolate; sequence SLLP.

This sequence belongs to the Fmt family.

It catalyses the reaction L-methionyl-tRNA(fMet) + (6R)-10-formyltetrahydrofolate = N-formyl-L-methionyl-tRNA(fMet) + (6S)-5,6,7,8-tetrahydrofolate + H(+). Its function is as follows. Attaches a formyl group to the free amino group of methionyl-tRNA(fMet). The formyl group appears to play a dual role in the initiator identity of N-formylmethionyl-tRNA by promoting its recognition by IF2 and preventing the misappropriation of this tRNA by the elongation apparatus. The protein is Methionyl-tRNA formyltransferase of Xylella fastidiosa (strain M23).